We begin with the raw amino-acid sequence, 160 residues long: G-protein-signaling modulator 3 (160 aa).

A disordered region spans residues 1-55 (MEAERPQEEEDGEQGPPQDEEGWPPPNSTTRPWRSAPPSPPPPGTRHTALGPRSA). Residues 7–22 (QEEEDGEQGPPQDEEG) are compositionally biased toward acidic residues. Phosphoserine occurs at positions 35, 39, 56, and 59. Residues 35-44 (SAPPSPPPPG) show a composition bias toward pro residues. Residue threonine 62 is modified to Phosphothreonine. GoLoco domains are found at residues 62–84 (TELL…RATF), 104–126 (REQL…RSEP), and 132–155 (GQEL…RSRP).

In terms of tissue distribution, expressed in heart, placenta, lung and liver.

It localises to the cytoplasm. Interacts with subunit of G(i) alpha proteins and regulates the activation of G(i) alpha proteins. This is G-protein-signaling modulator 3 (GPSM3) from Homo sapiens (Human).